We begin with the raw amino-acid sequence, 553 residues long: HTH-type transcriptional regulator SgrR (553 aa).

The HTH marR-type domain occupies 1 to 117 (MSTARLQQQF…LSQLGRSFRQ (117 aa)). A DNA-binding region (H-T-H motif) is located at residues 26–49 (LQELAEVLCCSRRHVRSLLGSMQQ). The tract at residues 163-494 (ELEPDLSHHW…EELHQDVELW (332 aa)) is solute-binding.

Its function is as follows. Activates the small RNA gene sgrS under glucose-phosphate stress conditions as well as yfdZ. Represses its own transcription under both stress and non-stress conditions. Might act as a sensor of the intracellular accumulation of phosphoglucose by binding these molecules in its C-terminal solute-binding domain. The chain is HTH-type transcriptional regulator SgrR from Yersinia enterocolitica serotype O:8 / biotype 1B (strain NCTC 13174 / 8081).